We begin with the raw amino-acid sequence, 258 residues long: Small ribosomal subunit protein eS1 (258 aa).

The tract at residues 235–258 (VASSGDAGSAVRRDGYEPPVQESV) is disordered.

The protein belongs to the eukaryotic ribosomal protein eS1 family. In terms of assembly, component of the small ribosomal subunit. Mature ribosomes consist of a small (40S) and a large (60S) subunit. The 40S subunit contains about 33 different proteins and 1 molecule of RNA (18S). The 60S subunit contains about 49 different proteins and 3 molecules of RNA (28S, 5.8S and 5S).

It is found in the cytoplasm. The protein is Small ribosomal subunit protein eS1 of Trichoplax adhaerens (Trichoplax reptans).